Consider the following 118-residue polypeptide: Ribonuclease P protein component (118 aa).

It belongs to the RnpA family. As to quaternary structure, consists of a catalytic RNA component (M1 or rnpB) and a protein subunit.

It catalyses the reaction Endonucleolytic cleavage of RNA, removing 5'-extranucleotides from tRNA precursor.. Functionally, RNaseP catalyzes the removal of the 5'-leader sequence from pre-tRNA to produce the mature 5'-terminus. It can also cleave other RNA substrates such as 4.5S RNA. The protein component plays an auxiliary but essential role in vivo by binding to the 5'-leader sequence and broadening the substrate specificity of the ribozyme. The polypeptide is Ribonuclease P protein component (Shewanella denitrificans (strain OS217 / ATCC BAA-1090 / DSM 15013)).